Here is an 820-residue protein sequence, read N- to C-terminus: Leucine--tRNA ligase (820 aa).

The 'HIGH' region signature appears at 40–51 (PYPSGAGLHVGH). The 'KMSKS' region signature appears at 601-605 (KMSKS). An ATP-binding site is contributed by Lys604.

This sequence belongs to the class-I aminoacyl-tRNA synthetase family.

It localises to the cytoplasm. The enzyme catalyses tRNA(Leu) + L-leucine + ATP = L-leucyl-tRNA(Leu) + AMP + diphosphate. The sequence is that of Leucine--tRNA ligase from Chlamydia abortus (strain DSM 27085 / S26/3) (Chlamydophila abortus).